The primary structure comprises 1136 residues: Probable RNA-dependent RNA polymerase 2 (1136 aa).

The disordered stretch occupies residues 965 to 989; it reads SGDSGALSSSSAQPSPTYDPDLEVP. Over residues 967 to 980 the composition is skewed to low complexity; that stretch reads DSGALSSSSAQPSP.

It belongs to the RdRP family.

The enzyme catalyses RNA(n) + a ribonucleoside 5'-triphosphate = RNA(n+1) + diphosphate. Functionally, probably involved in the RNA silencing pathway and required for the generation of small interfering RNAs (siRNAs). The polypeptide is Probable RNA-dependent RNA polymerase 2 (RDR2) (Oryza sativa subsp. japonica (Rice)).